The chain runs to 447 residues: ATP-dependent 6-phosphofructokinase (447 aa).

ATP contacts are provided by residues G88, 154 to 155 (RG), and 179 to 182 (GDGT). D180 contacts Mg(2+). Residues 208–210 (TVD), 253–255 (MGR), E315, and 368–371 (YIIR) each bind substrate. D210 acts as the Proton acceptor in catalysis.

Belongs to the phosphofructokinase type A (PFKA) family. PPi-dependent PFK group II subfamily. Atypical ATP-dependent clade 'X' sub-subfamily. Homodimer. The cofactor is Mg(2+).

It localises to the cytoplasm. It carries out the reaction beta-D-fructose 6-phosphate + ATP = beta-D-fructose 1,6-bisphosphate + ADP + H(+). It participates in carbohydrate degradation; glycolysis; D-glyceraldehyde 3-phosphate and glycerone phosphate from D-glucose: step 3/4. Catalyzes the phosphorylation of D-fructose 6-phosphate to fructose 1,6-bisphosphate by ATP, the first committing step of glycolysis. The chain is ATP-dependent 6-phosphofructokinase from Borreliella burgdorferi (strain ATCC 35210 / DSM 4680 / CIP 102532 / B31) (Borrelia burgdorferi).